An 85-amino-acid chain; its full sequence is Protein RnfH (85 aa).

It belongs to the UPF0125 (RnfH) family.

The polypeptide is Protein RnfH (Cereibacter sphaeroides (strain ATCC 17029 / ATH 2.4.9) (Rhodobacter sphaeroides)).